We begin with the raw amino-acid sequence, 228 residues long: NAD(P)H-hydrate epimerase (228 aa).

The YjeF N-terminal domain maps to A10 to I214. N58–D62 is a (6S)-NADPHX binding site. Positions 59 and 123 each coordinate K(+). (6S)-NADPHX contacts are provided by residues G127 to P133 and D156. A K(+)-binding site is contributed by S159.

This sequence belongs to the NnrE/AIBP family. Requires K(+) as cofactor.

It carries out the reaction (6R)-NADHX = (6S)-NADHX. It catalyses the reaction (6R)-NADPHX = (6S)-NADPHX. Functionally, catalyzes the epimerization of the S- and R-forms of NAD(P)HX, a damaged form of NAD(P)H that is a result of enzymatic or heat-dependent hydration. This is a prerequisite for the S-specific NAD(P)H-hydrate dehydratase to allow the repair of both epimers of NAD(P)HX. The protein is NAD(P)H-hydrate epimerase of Pediculus humanus subsp. corporis (Body louse).